The primary structure comprises 68 residues: MARVTVEDCLEKVDNRFLLVMLASKRVKQLFKGARPLIDNRGANKNVVVSLREIAAGKIGCEIGKKGR.

It belongs to the RNA polymerase subunit omega family. The RNAP catalytic core consists of 2 alpha, 1 beta, 1 beta' and 1 omega subunit. When a sigma factor is associated with the core the holoenzyme is formed, which can initiate transcription.

The enzyme catalyses RNA(n) + a ribonucleoside 5'-triphosphate = RNA(n+1) + diphosphate. Promotes RNA polymerase assembly. Latches the N- and C-terminal regions of the beta' subunit thereby facilitating its interaction with the beta and alpha subunits. This is DNA-directed RNA polymerase subunit omega from Citrifermentans bemidjiense (strain ATCC BAA-1014 / DSM 16622 / JCM 12645 / Bem) (Geobacter bemidjiensis).